The following is a 145-amino-acid chain: UPF0201 protein LS215_1276 (145 aa).

It belongs to the UPF0201 family.

The sequence is that of UPF0201 protein LS215_1276 from Saccharolobus islandicus (strain L.S.2.15 / Lassen #1) (Sulfolobus islandicus).